The chain runs to 247 residues: tRNA pseudouridine synthase A 1 (247 aa).

Asp53 (nucleophile) is an active-site residue. Tyr111 contributes to the substrate binding site.

Belongs to the tRNA pseudouridine synthase TruA family. As to quaternary structure, homodimer.

The enzyme catalyses uridine(38/39/40) in tRNA = pseudouridine(38/39/40) in tRNA. Formation of pseudouridine at positions 38, 39 and 40 in the anticodon stem and loop of transfer RNAs. The polypeptide is tRNA pseudouridine synthase A 1 (Bacillus cereus (strain ZK / E33L)).